We begin with the raw amino-acid sequence, 776 residues long: Lon protease (776 aa).

Residues 12-209 form the Lon N-terminal domain; sequence LPIIALRGLW…LVYKFVIKEI (198 aa). Residue 360-367 coordinates ATP; the sequence is GPPGVGKT. The 181-residue stretch at 596-776 folds into the Lon proteolytic domain; sequence EDTVGVVNGL…VKEILDEVLI (181 aa). Active-site residues include S683 and K726.

The protein belongs to the peptidase S16 family. In terms of assembly, homohexamer. Organized in a ring with a central cavity.

It localises to the cytoplasm. The catalysed reaction is Hydrolysis of proteins in presence of ATP.. ATP-dependent serine protease that mediates the selective degradation of mutant and abnormal proteins as well as certain short-lived regulatory proteins. Required for cellular homeostasis and for survival from DNA damage and developmental changes induced by stress. Degrades polypeptides processively to yield small peptide fragments that are 5 to 10 amino acids long. Binds to DNA in a double-stranded, site-specific manner. This Finegoldia magna (strain ATCC 29328 / DSM 20472 / WAL 2508) (Peptostreptococcus magnus) protein is Lon protease.